Reading from the N-terminus, the 386-residue chain is MTAGSDLDDFRGLLAKAFDERVVAWTAEAEAQERFPRQLIEHLGVCGVFDAKWATDARPDVGKLVELAFALGQLASAGIGVGVSLHDSAIAILRRFGKSDYLRDICDQAIRGAAVLCIGASEESGGSDLQIVETEIRSRDGGFEVRGVKKFVSLSPIADHIMVVARSVDHDPTSRHGNVAVVAVPAAQVSVQTPYRKVGAGPLDTAAVCIDTWVPADALVARAGTGLAAISWGLAHERMSIAGQIAASCQRAIGITLARMMSRRQFGQTLFEHQALRLRMADLQARVDLLRYALHGIAEQGRLELRTAAAVKVTAARLGEEVISECMHIFGGAGYLVDETTLGKWWRDMKLARVGGGTDEVLWELVAAGMTPDHDGYAAVVGASKA.

It belongs to the acyl-CoA dehydrogenase family. The cofactor is FAD.

Its pathway is siderophore biosynthesis; mycobactin biosynthesis. Functionally, catalyzes the dehydrogenation at the alpha-beta position of ACP-bound acyl chains. This results in the introduction of a double bond in the lipidic chain, which is further transferred to the epsilon-amino group of lysine residue in the mycobactin core by MbtK. The protein is Acyl-[acyl-carrier-protein] dehydrogenase MbtN (mbtN) of Mycobacterium bovis (strain ATCC BAA-935 / AF2122/97).